The primary structure comprises 247 residues: 4-hydroxy-tetrahydrodipicolinate reductase (247 aa).

Residues 12-17 (GITGRM), 78-80 (GTT), and 102-105 (AANF) each bind NAD(+). H136 functions as the Proton donor/acceptor in the catalytic mechanism. H137 provides a ligand contact to (S)-2,3,4,5-tetrahydrodipicolinate. The active-site Proton donor is the K140. Position 146-147 (146-147 (GT)) interacts with (S)-2,3,4,5-tetrahydrodipicolinate.

Belongs to the DapB family.

It is found in the cytoplasm. It catalyses the reaction (S)-2,3,4,5-tetrahydrodipicolinate + NAD(+) + H2O = (2S,4S)-4-hydroxy-2,3,4,5-tetrahydrodipicolinate + NADH + H(+). It carries out the reaction (S)-2,3,4,5-tetrahydrodipicolinate + NADP(+) + H2O = (2S,4S)-4-hydroxy-2,3,4,5-tetrahydrodipicolinate + NADPH + H(+). It functions in the pathway amino-acid biosynthesis; L-lysine biosynthesis via DAP pathway; (S)-tetrahydrodipicolinate from L-aspartate: step 4/4. In terms of biological role, catalyzes the conversion of 4-hydroxy-tetrahydrodipicolinate (HTPA) to tetrahydrodipicolinate. This Acidiphilium cryptum (strain JF-5) protein is 4-hydroxy-tetrahydrodipicolinate reductase.